The primary structure comprises 642 residues: Threonine--tRNA ligase (642 aa).

A TGS domain is found at 1 to 61 (MPVITLPDGS…ENDAQLSIIT (61 aa)). Residues 243–534 (DHRKIGKQLD…LTEEFAGFFP (292 aa)) are catalytic. The residue at position 286 (Lys286) is an N6-acetyllysine. Cys334, His385, and His511 together coordinate Zn(2+).

It belongs to the class-II aminoacyl-tRNA synthetase family. As to quaternary structure, homodimer. The cofactor is Zn(2+).

It localises to the cytoplasm. The catalysed reaction is tRNA(Thr) + L-threonine + ATP = L-threonyl-tRNA(Thr) + AMP + diphosphate + H(+). Its function is as follows. Catalyzes the attachment of threonine to tRNA(Thr) in a two-step reaction: L-threonine is first activated by ATP to form Thr-AMP and then transferred to the acceptor end of tRNA(Thr). Also edits incorrectly charged L-seryl-tRNA(Thr). In Escherichia coli O9:H4 (strain HS), this protein is Threonine--tRNA ligase.